The following is a 412-amino-acid chain: UPF0754 membrane protein syc0451_d (412 aa).

2 consecutive transmembrane segments (helical) span residues leucine 8–isoleucine 28 and isoleucine 390–leucine 410.

This sequence belongs to the UPF0754 family.

Its subcellular location is the cell inner membrane. This chain is UPF0754 membrane protein syc0451_d, found in Synechococcus sp. (strain ATCC 27144 / PCC 6301 / SAUG 1402/1) (Anacystis nidulans).